The chain runs to 83 residues: High-potential iron-sulfur protein (83 aa).

[4Fe-4S] cluster is bound by residues C43, C46, C61, and C75.

It belongs to the high-potential iron-sulfur protein (HiPIP) family. As to quaternary structure, homodimer.

Specific class of high-redox-potential 4Fe-4S ferredoxins. Functions in anaerobic electron transport in most purple and in some other photosynthetic bacteria and in at least one genus (Paracoccus) of halophilic, denitrifying bacteria. In Thermochromatium tepidum (Chromatium tepidum), this protein is High-potential iron-sulfur protein (hip).